Consider the following 421-residue polypeptide: UDP-N-acetylglucosamine 1-carboxyvinyltransferase 1 (421 aa).

Residue 22-23 (KN) coordinates phosphoenolpyruvate. Arg-94 provides a ligand contact to UDP-N-acetyl-alpha-D-glucosamine. Cys-118 functions as the Proton donor in the catalytic mechanism. A 2-(S-cysteinyl)pyruvic acid O-phosphothioketal modification is found at Cys-118. Residues 123–127 (RPIEL), Asp-310, and Val-332 contribute to the UDP-N-acetyl-alpha-D-glucosamine site.

This sequence belongs to the EPSP synthase family. MurA subfamily.

Its subcellular location is the cytoplasm. The catalysed reaction is phosphoenolpyruvate + UDP-N-acetyl-alpha-D-glucosamine = UDP-N-acetyl-3-O-(1-carboxyvinyl)-alpha-D-glucosamine + phosphate. Its pathway is cell wall biogenesis; peptidoglycan biosynthesis. In terms of biological role, cell wall formation. Adds enolpyruvyl to UDP-N-acetylglucosamine. This Clostridium perfringens (strain 13 / Type A) protein is UDP-N-acetylglucosamine 1-carboxyvinyltransferase 1.